The chain runs to 96 residues: UPF0235 protein Spro_4033 (96 aa).

This sequence belongs to the UPF0235 family.

The sequence is that of UPF0235 protein Spro_4033 from Serratia proteamaculans (strain 568).